The primary structure comprises 803 residues: MMKSLFYHFIGIGGIGMSALAHVLLDRGYSVSGSDLSEGKVVEKLKNKGAEFFLGNQEEHIPEGAVVVYSSSISKKNPEFLSAKSRGNRVVHRAELLAELAQDQISIFVTGSHGKTTVSSLITAILQEAKKNPSFAIGGLNQEGINGGSGSEYFVAEADESDGSIRCYTPEFSVITNIDDEHLSNFEGDRELLLASLKDFALKTQQICWYNGDCPRLRSCLQGHTFGLDSSCDLHILSYYQEGWRLYFTAKYQDVVYADIEVQLVGMHNVLNAAAAMGIALSLGIDEGAIRNAFRGFSGVQRRLQRKNSSETFLFLEDYAHHPSEISCTLRAVRTAVGQRRILAIYQPHRFSRLRECIDSFPSAFKDADEVLLTEVYSAGEEAEDISYQKLAEAISQESIVKCTHIPFHELQRHLEQSIRVHDVCVSLGAGNIVNLGEKLRDFEPQKLHLGIICGGKSCEHEISVLSAKNIAKHLSKSFYDVSYFLITREGLWESVSSLETAEDSGKSVFDPEIAQRLEKVDVVLPILHGPYGEDGAMQGFLETIGKPYTGPAIAFSAIAMNKVFTKRFMSDLGIPVVPYLPLTLAGWKQEQDKWLAHIVEAFSFPIFVKSSHLGSSIGVFEVHNVIELRDAINEAFMRDNDVFVEENRLGCKEIEVSVLGDGSGAFVVAGLHERRGSGGFIDYQEKYGLSGKSSAQIVFDTDLSKEIQEQILEAADKIYRLLLGKGSCRIDFFVDEEGNFWLSEMNPIPGMTETSPFLTSFIRKGWSYEQIVHQLVIDGLQRFNQRQRLISTSFVDQAFAIQ.

The segment at 1 to 446 (MMKSLFYHFI…GEKLRDFEPQ (446 aa)) is UDP-N-acetylmuramate--alanine ligase. ATP contacts are provided by residues 111–117 (GSHGKTT) and 600–655 (VEAF…CKEI). Positions 447–803 (KLHLGIICGG…SFVDQAFAIQ (357 aa)) are D-alanine--D-alanine ligase. One can recognise an ATP-grasp domain in the interval 567-778 (KRFMSDLGIP…YEQIVHQLVI (212 aa)). Mg(2+) is bound by residues D732, E745, and N747.

It in the N-terminal section; belongs to the MurCDEF family. In the C-terminal section; belongs to the D-alanine--D-alanine ligase family. The cofactor is Mg(2+). Requires Mn(2+) as cofactor.

Its subcellular location is the cytoplasm. The enzyme catalyses UDP-N-acetyl-alpha-D-muramate + L-alanine + ATP = UDP-N-acetyl-alpha-D-muramoyl-L-alanine + ADP + phosphate + H(+). It carries out the reaction 2 D-alanine + ATP = D-alanyl-D-alanine + ADP + phosphate + H(+). It participates in cell wall biogenesis; peptidoglycan biosynthesis. Functionally, cell wall formation. The polypeptide is Bifunctional enzyme MurC/Ddl (murC/ddl) (Chlamydia trachomatis serovar D (strain ATCC VR-885 / DSM 19411 / UW-3/Cx)).